The sequence spans 73 residues: Translation initiation factor IF-1 (73 aa).

The 73-residue stretch at 1–73 (MAKKDGAIEV…SRGRIVYRYK (73 aa)) folds into the S1-like domain.

Belongs to the IF-1 family. In terms of assembly, component of the 30S ribosomal translation pre-initiation complex which assembles on the 30S ribosome in the order IF-2 and IF-3, IF-1 and N-formylmethionyl-tRNA(fMet); mRNA recruitment can occur at any time during PIC assembly.

It localises to the cytoplasm. Functionally, one of the essential components for the initiation of protein synthesis. Stabilizes the binding of IF-2 and IF-3 on the 30S subunit to which N-formylmethionyl-tRNA(fMet) subsequently binds. Helps modulate mRNA selection, yielding the 30S pre-initiation complex (PIC). Upon addition of the 50S ribosomal subunit IF-1, IF-2 and IF-3 are released leaving the mature 70S translation initiation complex. The protein is Translation initiation factor IF-1 of Mycolicibacterium smegmatis (strain ATCC 700084 / mc(2)155) (Mycobacterium smegmatis).